The sequence spans 434 residues: MKRVYSKIESIAGNVITVTAQGIKYGELAIVKAKDTSSLAEVIKLDREKVSLQVYGGTRGVSTSDEIKFLGHTMQVSFSDNLLGRIFDGSGNPRDGGPSLDDNLIEIGGPSANPTKRIVPRNMIRTGLPMIDVFNTLVESQKLPIFSVSGEPYNELLVRIALQAEVDLIILGGMGLKHDDYLTFKDSLEKGGALSRTIFFVHTANDSVVESLTVPDISLSVAEKFALKGKKVLVLLTDMTNFADAMKEISITMEQVPSNRGYPGDLYSQLAYRYEKAIDFEGAGSITILAVTTMPGDDVTHPVPDNTGYITEGQYYLKGGRIEPFGSLSRLKQMVNSKTRDDHRTIMDTMIKLYASSKESVEKKAMGFNMTKWDEKLLKYSNMFESKMMDLSVNIPLEEALDLGWDILASCFSPKETGIKTDLIQKYWPKKETY.

Belongs to the ATPase alpha/beta chains family.

Produces ATP from ADP in the presence of a proton gradient across the membrane. The V-type beta chain is a regulatory subunit. This Borreliella afzelii (strain PKo) (Borrelia afzelii) protein is V-type ATP synthase beta chain.